Consider the following 399-residue polypeptide: Telomeric repeat-binding factor 2-interacting protein 1 (399 aa).

The segment at 1–21 (MAEAMELGKDPNGPTHSSTLF) is disordered. Ala-2 carries the N-acetylalanine modification. The region spanning 10–101 (DPNGPTHSST…EKLELEAYRL (92 aa)) is the BRCT domain. Phosphoserine is present on residues Ser-36 and Ser-43. A Glycyl lysine isopeptide (Lys-Gly) (interchain with G-Cter in SUMO2) cross-link involves residue Lys-114. Positions 130–190 (QSQAGRMVFT…SMKDRYLKRL (61 aa)) constitute a Myb-like domain. Ser-156 and Ser-158 each carry phosphoserine. Residue Lys-196 forms a Glycyl lysine isopeptide (Lys-Gly) (interchain with G-Cter in SUMO2) linkage. 2 disordered regions span residues 199 to 245 (LGEA…KEEI) and 279 to 309 (TMCD…VSAP). Phosphoserine occurs at positions 205 and 208. Residues Lys-210, Lys-214, and Lys-242 each participate in a glycyl lysine isopeptide (Lys-Gly) (interchain with G-Cter in SUMO2) cross-link. Over residues 281 to 304 (CDDDPCTPEEDSETQPDEEEEEEE) the composition is skewed to acidic residues. Lys-372 is covalently cross-linked (Glycyl lysine isopeptide (Lys-Gly) (interchain with G-Cter in SUMO2)). The Nuclear localization signal signature appears at 383–399 (KKFGAQNVARRIEFRKK).

The protein belongs to the RAP1 family. As to quaternary structure, associates with the I-kappa-B-kinase (IKK) core complex, composed of CHUK, IKBKB and IKBKG. Homodimer. Component of the shelterin complex (telosome) composed of TERF1, TERF2, TINF2, TERF2IP ACD and POT1. Interacts with TERF2 (but not TERF1) with its C-terminus. Interacts with SLX4/BTBD12. Interacts with TERF2; the interaction is direct.

It is found in the nucleus. The protein localises to the cytoplasm. It localises to the chromosome. Its subcellular location is the telomere. Acts both as a regulator of telomere function and as a transcription regulator. Involved in the regulation of telomere length and protection as a component of the shelterin complex (telosome). In contrast to other components of the shelterin complex, it is dispensible for telomere capping and does not participate in the protection of telomeres against non-homologous end-joining (NHEJ)-mediated repair. Instead, it is required to negatively regulate telomere recombination and is essential for repressing homology-directed repair (HDR), which can affect telomere length. Does not bind DNA directly: recruited to telomeric double-stranded 5'-TTAGGG-3' repeats via its interaction with TERF2. Independently of its function in telomeres, also acts as a transcription regulator: recruited to extratelomeric 5'-TTAGGG-3' sites via its association with TERF2 or other factors, and regulates gene expression. When cytoplasmic, associates with the I-kappa-B-kinase (IKK) complex and acts as a regulator of the NF-kappa-B signaling by promoting IKK-mediated phosphorylation of RELA/p65, leading to activate expression of NF-kappa-B target genes. The chain is Telomeric repeat-binding factor 2-interacting protein 1 (TERF2IP) from Bos taurus (Bovine).